The chain runs to 382 residues: Opsin-VA (382 aa).

Residues 1-35 (MELFPVAVNGVSHAEDPFSGPLTFIAPWNYKVLAT) are Extracellular-facing. Residues 36 to 56 (LMFVVTAASLSENFAVMLVTF) traverse the membrane as a helical segment. Topologically, residues 57-67 (RFTQLRKPLNY) are cytoplasmic. Residues 68-88 (IIVNLSLADFLVSLTGGTISF) form a helical membrane-spanning segment. Residues 89–103 (LTNYHGYFFLGKWAC) are Extracellular-facing. A disulfide bridge links Cys103 with Cys180. The helical transmembrane segment at 104–124 (VLEGFAVTYFGIVALWSLAVL) threads the bilayer. Topologically, residues 125 to 147 (AFERFFVICRPLGNIRLRGKHAA) are cytoplasmic. Residues 148–168 (LGLLFVWTFSFIWTIPPVLGW) traverse the membrane as a helical segment. Over 169-193 (SSYTVSKIGTTCEPNWYSGNFHDHT) the chain is Extracellular. Residues 194 to 214 (FIIAFFITCFILPLGVIVVCY) form a helical membrane-spanning segment. The Cytoplasmic segment spans residues 215 to 244 (CKLIKKLRKVSNTHGRLGNARKPERQVTRM). The helical transmembrane segment at 245-265 (VVVMIVAFMVAWTPYAAFSIV) threads the bilayer. Residues 266 to 279 (VTAHPSIHLDPRLA) lie on the Extracellular side of the membrane. Residues 280–300 (AAPAFFSKTAAVYNPVIYVFM) form a helical membrane-spanning segment. Lys287 carries the post-translational modification N6-(retinylidene)lysine. Residues 301 to 382 (NKQFRKCLVQ…PIPENKVCPM (82 aa)) lie on the Cytoplasmic side of the membrane. A compositionally biased stretch (polar residues) spans 330-346 (RQGMTNESHTGEMSTIA). The segment at 330–371 (RQGMTNESHTGEMSTIASRIPKDGSIPEKTQEHPGERRSLAH) is disordered. Over residues 349–368 (IPKDGSIPEKTQEHPGERRS) the composition is skewed to basic and acidic residues.

This sequence belongs to the G-protein coupled receptor 1 family. Opsin subfamily. In terms of tissue distribution, expressed in a subset of retinal horizontal cells as well as in retinal ganglion cells.

It is found in the membrane. This Rutilus rutilus (Roach) protein is Opsin-VA.